The sequence spans 91 residues: Large ribosomal subunit protein uL22 (91 aa).

The protein belongs to the universal ribosomal protein uL22 family. In terms of assembly, part of the 50S ribosomal subunit.

Functionally, this protein binds specifically to 23S rRNA; its binding is stimulated by other ribosomal proteins, e.g. L4, L17, and L20. It is important during the early stages of 50S assembly. It makes multiple contacts with different domains of the 23S rRNA in the assembled 50S subunit and ribosome. Its function is as follows. The globular domain of the protein is located near the polypeptide exit tunnel on the outside of the subunit, while an extended beta-hairpin is found that lines the wall of the exit tunnel in the center of the 70S ribosome. The chain is Large ribosomal subunit protein uL22 (rplV) from Loofah witches'-broom phytoplasma.